The following is a 410-amino-acid chain: Elongation factor Tu, chloroplastic (410 aa).

The tr-type G domain maps to Lys10 to Lys215. The tract at residues Gly19 to Thr26 is G1. Gly19–Thr26 lines the GTP pocket. Thr26 lines the Mg(2+) pocket. Residues Gly61–Asn65 are G2. The interval Asp82–Gly85 is G3. Residues Asp82–His86 and Asn137–Asp140 contribute to the GTP site. The G4 stretch occupies residues Asn137–Asp140. Residues Ser175–Leu177 are G5.

The protein belongs to the TRAFAC class translation factor GTPase superfamily. Classic translation factor GTPase family. EF-Tu/EF-1A subfamily.

The protein localises to the plastid. It localises to the chloroplast. The catalysed reaction is GTP + H2O = GDP + phosphate + H(+). Functionally, GTP hydrolase that promotes the GTP-dependent binding of aminoacyl-tRNA to the A-site of ribosomes during protein biosynthesis. This Nephroselmis olivacea (Green alga) protein is Elongation factor Tu, chloroplastic (tufA).